Here is a 420-residue protein sequence, read N- to C-terminus: Gamma-glutamyl phosphate reductase (420 aa).

It belongs to the gamma-glutamyl phosphate reductase family.

Its subcellular location is the cytoplasm. It carries out the reaction L-glutamate 5-semialdehyde + phosphate + NADP(+) = L-glutamyl 5-phosphate + NADPH + H(+). Its pathway is amino-acid biosynthesis; L-proline biosynthesis; L-glutamate 5-semialdehyde from L-glutamate: step 2/2. Its function is as follows. Catalyzes the NADPH-dependent reduction of L-glutamate 5-phosphate into L-glutamate 5-semialdehyde and phosphate. The product spontaneously undergoes cyclization to form 1-pyrroline-5-carboxylate. The sequence is that of Gamma-glutamyl phosphate reductase from Streptococcus pneumoniae serotype 2 (strain D39 / NCTC 7466).